A 282-amino-acid polypeptide reads, in one-letter code: Endochitinase 4 (282 aa).

Residues Gly1–Lys282 enclose the GH18 domain. Residue Glu112 is the Proton donor of the active site. Asn265 carries an N-linked (GlcNAc...) asparagine glycan.

It belongs to the glycosyl hydrolase 18 family. Chitinase class V subfamily.

The protein localises to the secreted. The enzyme catalyses Random endo-hydrolysis of N-acetyl-beta-D-glucosaminide (1-&gt;4)-beta-linkages in chitin and chitodextrins.. Its function is as follows. Secreted chitinase involved in the degradation of chitin, a component of the cell walls of fungi and exoskeletal elements of some animals (including worms and arthropods). Participates in the infection process and directly acts in the penetration process of the host cuticle. The chain is Endochitinase 4 (chi4) from Metarhizium anisopliae (Entomophthora anisopliae).